Reading from the N-terminus, the 563-residue chain is Arginine--tRNA ligase (563 aa).

A 'HIGH' region motif is present at residues 134–144 (ANPTGLLHMGN).

It belongs to the class-I aminoacyl-tRNA synthetase family. As to quaternary structure, monomer.

Its subcellular location is the cytoplasm. The catalysed reaction is tRNA(Arg) + L-arginine + ATP = L-arginyl-tRNA(Arg) + AMP + diphosphate. The protein is Arginine--tRNA ligase of Heliobacterium modesticaldum (strain ATCC 51547 / Ice1).